Here is a 90-residue protein sequence, read N- to C-terminus: MAVKIRLKRMGAKKSPFYRIVVADSRSPRDGRFIETIGTYNPLTEPAEIKINEELALKWLQNGAKPSDTVRNLLSKQGILEKFHNLKYGK.

This sequence belongs to the bacterial ribosomal protein bS16 family.

This Anoxybacillus flavithermus (strain DSM 21510 / WK1) protein is Small ribosomal subunit protein bS16.